We begin with the raw amino-acid sequence, 1005 residues long: Band 4.1-like protein 2 (1005 aa).

The tract at residues 1 to 80 (MTTEVGSVSE…SRGISRFIPP (80 aa)) is disordered. N-acetylthreonine is present on Thr2. Ser7 carries the phosphoserine modification. Positions 22-31 (ATKEKPKEVA) are enriched in basic and acidic residues. Phosphoserine is present on residues Ser39, Ser58, and Ser87. Residue Thr89 is modified to Phosphothreonine. The tract at residues 93-196 (AKDGGDKKEP…GGAAKRETKE (104 aa)) is disordered. 2 stretches are compositionally biased toward basic and acidic residues: residues 111–157 (VLDK…EKPS) and 169–196 (VSKE…ETKE). Glycyl lysine isopeptide (Lys-Gly) (interchain with G-Cter in SUMO2) cross-links involve residues Lys140 and Lys144. Phosphoserine is present on residues Ser170, Ser208, Ser386, Ser402, Ser499, Ser550, Ser562, Ser575, Ser598, and Ser614. Residues 218-499 (VQCKVTLLDG…EHHTFYRLVS (282 aa)) form the FERM domain. The tract at residues 502-610 (QPPKAKFLTL…KAPHLQLIEG (109 aa)) is hydrophilic. The tract at residues 611–676 (KKNSLRVEGD…WEKRRITPLS (66 aa)) is spectrin--actin-binding. Tyr623 is subject to Phosphotyrosine. Phosphoserine is present on residues Ser627 and Ser647. Residues 652–800 (KRNFMESTPE…EEAVPEASPV (149 aa)) form a disordered region. Positions 675 to 686 (LSLQTQGSSHET) are enriched in polar residues. Residues 690 to 711 (VEEKKRAEVGKDERVITEEMNG) are compositionally biased toward basic and acidic residues. A phosphoserine mark is found at Ser715 and Ser718. Residues 734 to 746 (STSLSSESSSSSS) show a composition bias toward low complexity. Basic and acidic residues-rich tracts occupy residues 754-770 (GEYR…IREE) and 780-793 (EPRP…REEA). Position 763 is a phosphothreonine (Thr763). The residue at position 828 (Ser828) is a Phosphoserine. Residues 855 to 1005 (HVDIDVLPQI…ETELAEEGED (151 aa)) form a C-terminal (CTD) region.

In terms of assembly, interacts with FCGR1A. Interacts with TRPC4. Interacts (via CTD domain) with FKBP2. Interacts with NUMA1; this interaction is negatively regulated by CDK1 during metaphase and promotes anaphase-specific localization of NUMA1 in symmetrically dividing cells. Widely expressed.

It localises to the cytoplasm. It is found in the cytoskeleton. Its subcellular location is the cell cortex. The protein resides in the cell membrane. Required for dynein-dynactin complex and NUMA1 recruitment at the mitotic cell cortex during anaphase. This chain is Band 4.1-like protein 2, found in Homo sapiens (Human).